Reading from the N-terminus, the 670-residue chain is Receptor for retinol uptake stra6 (670 aa).

Residues 1–38 are Extracellular-facing; the sequence is MSAETVNNYDYSDWYENAAPTKAPVEVIPPCDPTADEG. Residues 39–59 traverse the membrane as a helical segment; the sequence is LFHICIAAISLVVMLVLAILA. Residues 60–87 lie on the Cytoplasmic side of the membrane; the sequence is RRQKLSDNQRGLTGLLSPVNFLDHTQHK. A helical membrane pass occupies residues 88–108; the sequence is GLAVAVYGVLFCKLVGMVLSH. The Extracellular segment spans residues 109-121; that stretch reads HPLPFTKEVANKE. A helical transmembrane segment spans residues 122-142; the sequence is FWMILALLYYPALYYPLLACG. The Cytoplasmic portion of the chain corresponds to 143–145; the sequence is TLH. Residues 146–166 form a helical membrane-spanning segment; that stretch reads NKVGYVLGSLLSWTHFGILVW. Residues 167–182 lie on the Extracellular side of the membrane; sequence QKVDCPKTPQIYKYYA. The helical transmembrane segment at 183–203 threads the bilayer; the sequence is LFGSLPQIACLAFLSFQYPLL. The Cytoplasmic portion of the chain corresponds to 204–274; that stretch reads LFKGLQNTET…PEDVFRFPLK (71 aa). The helical transmembrane segment at 275 to 295 threads the bilayer; it reads LAISVVVAFIALYQMALLLIS. Residues 296-346 are Extracellular-facing; it reads GVLPTLHIVRRGVDENIAFLLAGFNIILSNDRQEVVRIVVYYLWCVEICYV. A helical membrane pass occupies residues 347–367; it reads SAVTLSCLVNLLMLMRSMVLH. The Cytoplasmic portion of the chain corresponds to 368-401; it reads RSNLKGLYRGDSLNVFNCHRSIRPSRPALVCWMG. Residues 402–422 form a helical membrane-spanning segment; it reads FTSYQAAFLCLGMAIQTLVFF. Residues 423–452 are Extracellular-facing; the sequence is ICILFAVFLIIIPILWGTNLMLFHIIGNLW. The helical transmembrane segment at 453–473 threads the bilayer; sequence PFWLTLVLAALIQHVASRFLF. Residues 474–488 lie on the Cytoplasmic side of the membrane; sequence IRKDGGTRDLNNRGS. Residues 489-526 constitute an intramembrane region (helical); sequence LFLLSYILFLVNVMIGVVLGIWRVVITALFNIVHLGRL. Residues 527–670 lie on the Cytoplasmic side of the membrane; sequence DISLLNRNVE…KEAESAAASN (144 aa). The tract at residues 600-626 is interaction with calmodulin; it reads VSNAKRARAHWQLLYTLVNNPSLVGSR. The disordered stretch occupies residues 640-670; the sequence is GALSRTSKEGSKKDGSVNEPSKEAESAAASN. Residues 645–664 are compositionally biased toward basic and acidic residues; that stretch reads TSKEGSKKDGSVNEPSKEAE.

Homodimer. Interacts (via C-terminus) with calmodulin.

Its subcellular location is the cell membrane. Functionally, retinol transporter. Accepts retinol from the extracellular retinol-binding protein rbp4, mediates retinol transport across the cell membrane, and then transmits retinol to the cytoplasmic retinol-binding protein rbp1. Required for normal vitamin A homeostasis. The sequence is that of Receptor for retinol uptake stra6 from Danio rerio (Zebrafish).